The chain runs to 467 residues: Geranylgeranyl diphosphate reductase, chloroplastic (467 aa).

Residues 1 to 43 (MATTVTLKSFTGLRQSSTEQTNFVSHVPSSLSLPQRRTSLRVT) constitute a chloroplast transit peptide.

It belongs to the geranylgeranyl reductase family. ChlP subfamily. As to quaternary structure, part of the FLU-containing chloroplast membrane complex composed of FLU, CRD1, PORB, PORC, CHLP and HEMA1.

It localises to the plastid. The protein localises to the chloroplast membrane. The enzyme catalyses phytyl diphosphate + 3 NADP(+) = geranylgeranyl diphosphate + 3 NADPH + 3 H(+). It participates in porphyrin-containing compound metabolism; chlorophyll biosynthesis. It functions in the pathway cofactor biosynthesis; tocopherol biosynthesis. Its function is as follows. Catalyzes the reduction of geranylgeranyl diphosphate to phytyl diphosphate, providing phytol for both tocopherol and chlorophyll synthesis. This is Geranylgeranyl diphosphate reductase, chloroplastic (CHLP) from Arabidopsis thaliana (Mouse-ear cress).